A 502-amino-acid chain; its full sequence is Facilitated trehalose transporter Tret1 (502 aa).

The Cytoplasmic portion of the chain corresponds to 1-38 (MGVENTKQTMSSQNIKPAKDSDDVLHTQFKEVKRSPMR). Residues 39–59 (YTMQLLAALAVSMASLMIGYS) form a helical membrane-spanning segment. At 60-83 (SSYTSPALVSMRDNTTATFEVTMD) the chain is on the extracellular side. N-linked (GlcNAc...) asparagine glycosylation occurs at asparagine 73. The helical transmembrane segment at 84-104 (MAMWIGSIMPLSALIGGIIGG) threads the bilayer. The Cytoplasmic segment spans residues 105–120 (PCIEYIGRRNTILSTA). A helical membrane pass occupies residues 121-141 (LPFLAGWLFIALATNVAMILV). At 142–144 (GRS) the chain is on the extracellular side. The helical transmembrane segment at 145–165 (ICGFCVGVASLSLPVYLGESI) threads the bilayer. Residues 166 to 172 (QPEVRGS) are Cytoplasmic-facing. Residues 173 to 193 (LGLLPTVFGNSGILMCFTAGM) form a helical membrane-spanning segment. Residues 194–199 (YLAWRN) lie on the Extracellular side of the membrane. A helical transmembrane segment spans residues 200 to 220 (LALLGACIPIIFLILMFLIPE). Over 221–282 (TPRWYISKGK…ELFRKNHIKP (62 aa)) the chain is Cytoplasmic. Residues 283–303 (VFISLGLMFFQQFSGINAVIF) form a helical membrane-spanning segment. The Extracellular portion of the chain corresponds to 304-319 (YTVQIFKDSGSTVDEN). An N-linked (GlcNAc...) asparagine glycan is attached at asparagine 319. A helical membrane pass occupies residues 320-340 (LSTIIVGLVNFISTFVAAMII). Residues 341–346 (DRLGRK) are Cytoplasmic-facing. A helical transmembrane segment spans residues 347–367 (MLLYISSILMCITLFTFGTFF). The Extracellular segment spans residues 368-376 (YVKELMDVT). The chain crosses the membrane as a helical span at residues 377–397 (AFGWIPLMSLIVYVIGFSFGF). Topologically, residues 398–410 (GPIPWLMMGEILP) are cytoplasmic. A helical transmembrane segment spans residues 411-433 (VKIRGTAASVATAFNWSCTFVVT). The Extracellular segment spans residues 434 to 446 (KTYEDLVLHIGPY). A helical membrane pass occupies residues 447–467 (GTFWLFGTLVAVAFIFVIICV). Topologically, residues 468-502 (PETRGRSLEEIERRFAGPVRRTSAIANLKPMPITI) are cytoplasmic.

Belongs to the major facilitator superfamily. Sugar transporter (TC 2.A.1.1) family. Trehalose transporter subfamily.

The protein resides in the cell membrane. Moderate-capacity facilitative transporter for trehalose. Does not transport maltose, sucrose or lactose. Mediates the bidirectional transfer of trehalose. Responsible for the transport of trehalose synthesized in the fat body and the incorporation of trehalose into other tissues that require a carbon source, thereby regulating trehalose levels in the hemolymph. The polypeptide is Facilitated trehalose transporter Tret1 (Apis mellifera ligustica (Common honeybee)).